A 377-amino-acid chain; its full sequence is UDP-N-acetylglucosamine--N-acetylmuramyl-(pentapeptide) pyrophosphoryl-undecaprenol N-acetylglucosamine transferase (377 aa).

Residues 11–13, asparagine 123, arginine 164, serine 194, and glutamine 295 each bind UDP-N-acetyl-alpha-D-glucosamine; that span reads TGG.

This sequence belongs to the glycosyltransferase 28 family. MurG subfamily.

Its subcellular location is the cell inner membrane. The catalysed reaction is di-trans,octa-cis-undecaprenyl diphospho-N-acetyl-alpha-D-muramoyl-L-alanyl-D-glutamyl-meso-2,6-diaminopimeloyl-D-alanyl-D-alanine + UDP-N-acetyl-alpha-D-glucosamine = di-trans,octa-cis-undecaprenyl diphospho-[N-acetyl-alpha-D-glucosaminyl-(1-&gt;4)]-N-acetyl-alpha-D-muramoyl-L-alanyl-D-glutamyl-meso-2,6-diaminopimeloyl-D-alanyl-D-alanine + UDP + H(+). Its pathway is cell wall biogenesis; peptidoglycan biosynthesis. Cell wall formation. Catalyzes the transfer of a GlcNAc subunit on undecaprenyl-pyrophosphoryl-MurNAc-pentapeptide (lipid intermediate I) to form undecaprenyl-pyrophosphoryl-MurNAc-(pentapeptide)GlcNAc (lipid intermediate II). The polypeptide is UDP-N-acetylglucosamine--N-acetylmuramyl-(pentapeptide) pyrophosphoryl-undecaprenol N-acetylglucosamine transferase (Opitutus terrae (strain DSM 11246 / JCM 15787 / PB90-1)).